Reading from the N-terminus, the 393-residue chain is DNA-directed RNA polymerase subunit Rpo1C (393 aa).

Belongs to the RNA polymerase beta' chain family. In terms of assembly, part of the RNA polymerase complex.

The protein localises to the cytoplasm. It carries out the reaction RNA(n) + a ribonucleoside 5'-triphosphate = RNA(n+1) + diphosphate. Functionally, DNA-dependent RNA polymerase (RNAP) catalyzes the transcription of DNA into RNA using the four ribonucleoside triphosphates as substrates. Forms part of the jaw domain. The sequence is that of DNA-directed RNA polymerase subunit Rpo1C from Thermococcus celer.